Reading from the N-terminus, the 86-residue chain is Small ribosomal subunit protein bS20 (86 aa).

Over residues 1 to 27 the composition is skewed to basic residues; that stretch reads MANIKSAKKRAVQSEKRRQHNASRRSM. A disordered region spans residues 1–28; sequence MANIKSAKKRAVQSEKRRQHNASRRSMM.

The protein belongs to the bacterial ribosomal protein bS20 family.

Functionally, binds directly to 16S ribosomal RNA. This chain is Small ribosomal subunit protein bS20, found in Proteus mirabilis (strain HI4320).